A 148-amino-acid polypeptide reads, in one-letter code: Lipoprotein MlpH (148 aa).

The signal sequence occupies residues 1 to 17 (MKIINILFCLFLLMLNG). Cys18 is lipidated: N-palmitoyl cysteine. The S-diacylglycerol cysteine moiety is linked to residue Cys18. Positions 26-61 (LKNNAQQTKSRRKRDLTQKEVTQEKPKSKEELLREK) are disordered. Residues 40-61 (DLTQKEVTQEKPKSKEELLREK) are compositionally biased toward basic and acidic residues.

It belongs to the Multicopy lipoprotein (Mlp) family.

It is found in the cell outer membrane. An outer membrane protein that may participate in pathogenesis. Some human Lyme disease patients have antibodies against this protein. The Mlp proteins probably undergo intragenic recombination, generating new alleles. The chain is Lipoprotein MlpH from Borreliella burgdorferi (strain ATCC 35210 / DSM 4680 / CIP 102532 / B31) (Borrelia burgdorferi).